Here is a 189-residue protein sequence, read N- to C-terminus: Pyridoxal 5'-phosphate synthase subunit PdxT (189 aa).

46–48 (GES) is a binding site for L-glutamine. Cys-78 serves as the catalytic Nucleophile. L-glutamine-binding positions include Arg-107 and 136–137 (IR). Residues His-173 and Glu-175 each act as charge relay system in the active site.

It belongs to the glutaminase PdxT/SNO family. As to quaternary structure, in the presence of PdxS, forms a dodecamer of heterodimers. Only shows activity in the heterodimer.

It catalyses the reaction aldehydo-D-ribose 5-phosphate + D-glyceraldehyde 3-phosphate + L-glutamine = pyridoxal 5'-phosphate + L-glutamate + phosphate + 3 H2O + H(+). It carries out the reaction L-glutamine + H2O = L-glutamate + NH4(+). It participates in cofactor biosynthesis; pyridoxal 5'-phosphate biosynthesis. In terms of biological role, catalyzes the hydrolysis of glutamine to glutamate and ammonia as part of the biosynthesis of pyridoxal 5'-phosphate. The resulting ammonia molecule is channeled to the active site of PdxS. The sequence is that of Pyridoxal 5'-phosphate synthase subunit PdxT from Roseiflexus castenholzii (strain DSM 13941 / HLO8).